The sequence spans 475 residues: Putative F-box protein At1g46840 (475 aa).

The F-box domain occupies 25–71 (TYVLEKLHIDLVIEILSRLSAKSIAICRCVSKQWNSLLVSQDFVESF). Residues 423–433 (SSYSTTRSYKS) are compositionally biased toward low complexity. The segment at 423–475 (SSYSTTRSYKSSGKRCSDRSIGEDEQDDIGEKRGDQAAERRERSTKRGKHEVH) is disordered. The segment covering 451–464 (IGEKRGDQAAERRE) has biased composition (basic and acidic residues). A compositionally biased stretch (basic residues) spans 465–475 (RSTKRGKHEVH).

The protein is Putative F-box protein At1g46840 of Arabidopsis thaliana (Mouse-ear cress).